The chain runs to 130 residues: Holo-[acyl-carrier-protein] synthase (130 aa).

Mg(2+)-binding residues include Asp8 and Glu62.

This sequence belongs to the P-Pant transferase superfamily. AcpS family. The cofactor is Mg(2+).

The protein localises to the cytoplasm. It catalyses the reaction apo-[ACP] + CoA = holo-[ACP] + adenosine 3',5'-bisphosphate + H(+). Its function is as follows. Transfers the 4'-phosphopantetheine moiety from coenzyme A to a Ser of acyl-carrier-protein. This Acidovorax ebreus (strain TPSY) (Diaphorobacter sp. (strain TPSY)) protein is Holo-[acyl-carrier-protein] synthase.